Here is a 196-residue protein sequence, read N- to C-terminus: Protease (196 aa).

Active-site residues include His54, Asp70, and Cys121.

The protein belongs to the peptidase C5 family. Interacts with protease cofactor pVI-C; this interaction is necessary for protease activation.

The protein resides in the virion. It is found in the host nucleus. It catalyses the reaction Cleaves proteins of the adenovirus and its host cell at two consensus sites: -Yaa-Xaa-Gly-Gly-|-Xaa- and -Yaa-Xaa-Gly-Xaa-|-Gly- (in which Yaa is Met, Ile or Leu, and Xaa is any amino acid).. Its activity is regulated as follows. Requires DNA and protease cofactor for maximal activation. Inside nascent virions, becomes partially activated by binding to the viral DNA, allowing it to cleave the cofactor that binds to the protease and fully activates it. Actin, like the viral protease cofactor, seems to act as a cofactor in the cleavage of cytokeratin 18 and of actin itself. Its function is as follows. Cleaves viral precursor proteins (pTP, pIIIa, pVI, pVII, pVIII, and pX) inside newly assembled particles giving rise to mature virions. Protease complexed to its cofactor slides along the viral DNA to specifically locate and cleave the viral precursors. Mature virions have a weakened organization compared to the unmature virions, thereby facilitating subsequent uncoating. Without maturation, the particle lacks infectivity and is unable to uncoat. Late in adenovirus infection, in the cytoplasm, may participate in the cytoskeleton destruction. Cleaves host cell cytoskeletal keratins K7 and K18. The protein is Protease of Bos taurus (Bovine).